Reading from the N-terminus, the 40-residue chain is Photosystem II reaction center protein J (40 aa).

A helical transmembrane segment spans residues 8 to 28; the sequence is IPLWLIGTLTGILVIGLIGIF.

Belongs to the PsbJ family. PSII is composed of 1 copy each of membrane proteins PsbA, PsbB, PsbC, PsbD, PsbE, PsbF, PsbH, PsbI, PsbJ, PsbK, PsbL, PsbM, PsbT, PsbX, PsbY, PsbZ, Psb30/Ycf12, at least 3 peripheral proteins of the oxygen-evolving complex and a large number of cofactors. It forms dimeric complexes.

Its subcellular location is the plastid. The protein localises to the chloroplast thylakoid membrane. Its function is as follows. One of the components of the core complex of photosystem II (PSII). PSII is a light-driven water:plastoquinone oxidoreductase that uses light energy to abstract electrons from H(2)O, generating O(2) and a proton gradient subsequently used for ATP formation. It consists of a core antenna complex that captures photons, and an electron transfer chain that converts photonic excitation into a charge separation. The sequence is that of Photosystem II reaction center protein J from Phalaenopsis aphrodite subsp. formosana (Moth orchid).